Consider the following 191-residue polypeptide: Lipopolysaccharide export system protein LptC (191 aa).

Residues 7–25 form a helical membrane-spanning segment; that stretch reads WVIIVLSLAVLVMIGINMA.

Belongs to the LptC family. As to quaternary structure, component of the lipopolysaccharide transport and assembly complex. Interacts with LptA and the LptBFG transporter complex.

It is found in the cell inner membrane. In terms of biological role, involved in the assembly of lipopolysaccharide (LPS). Required for the translocation of LPS from the inner membrane to the outer membrane. Facilitates the transfer of LPS from the inner membrane to the periplasmic protein LptA. Could be a docking site for LptA. The protein is Lipopolysaccharide export system protein LptC of Escherichia coli O157:H7.